The primary structure comprises 958 residues: Transportin MOS14 (958 aa).

In terms of domain architecture, Importin N-terminal spans 26–93; that stretch reads ADRWLQNFQG…RQSLTTLLKK (68 aa).

This sequence belongs to the importin beta family. As to quaternary structure, interacts with RS2Z33, RSZ21, RS31A, SR34 and RAN1.

It localises to the nucleus. In terms of biological role, functions as a nuclear import receptor for serine-arginine rich (SR) proteins. Regulates nuclear import of SR proteins that are required for proper splicing of the two resistance (R) genes SNC1 and RPS4, a crucial step for their functions in plant immunity. This chain is Transportin MOS14, found in Arabidopsis thaliana (Mouse-ear cress).